The chain runs to 345 residues: Heat stress transcription factor A-4c (345 aa).

Residues 11-105 mediate DNA binding; that stretch reads LPPFLTKTYE…LMKNIHRRKP (95 aa). Residues 119-185 form a hydrophobic repeat HR-A/B region; sequence PLTESERRSM…SIVAYVSQVL (67 aa). Positions 199–203 match the Nuclear localization signal motif; the sequence is RRKRR. Positions 226 to 235 match the AHA1 motif; it reads LTFWENLVSE. Residues 240–329 are disordered; the sequence is SGLQSSSMDH…NGNKIGNQRT (90 aa). Over residues 274–283 the composition is skewed to low complexity; that stretch reads PPVTVTAPAP. The short motif at 289–298 is the AHA2 element; it reads DDFWEQCLTE. Composition is skewed to polar residues over residues 296 to 308 and 317 to 329; these read LTENPGSTEQQEV and NDNNGNKIGNQRT.

Belongs to the HSF family. Class A subfamily. As to quaternary structure, homotrimer. In terms of processing, exhibits temperature-dependent phosphorylation. Expressed in roots, seedlings and at lower levels in leaves.

The protein resides in the nucleus. Functionally, transcriptional activator that specifically binds DNA sequence 5'-AGAAnnTTCT-3' known as heat shock promoter elements (HSE). May be involved in general response to auxin. In Arabidopsis thaliana (Mouse-ear cress), this protein is Heat stress transcription factor A-4c (HSFA4C).